The following is a 452-amino-acid chain: tRNA modification GTPase MnmE (452 aa).

Arginine 24, glutamate 81, and lysine 120 together coordinate (6S)-5-formyl-5,6,7,8-tetrahydrofolate. The TrmE-type G domain maps to 217-373 (GIKTAIVGKT…LIMKIEQMHI (157 aa)). Asparagine 227 contacts K(+). GTP contacts are provided by residues 227 to 232 (NVGKSS), 246 to 252 (TDIHGTT), and 271 to 274 (DTAG). Serine 231 is a binding site for Mg(2+). Threonine 246, isoleucine 248, and threonine 251 together coordinate K(+). Position 252 (threonine 252) interacts with Mg(2+). Lysine 452 serves as a coordination point for (6S)-5-formyl-5,6,7,8-tetrahydrofolate.

Belongs to the TRAFAC class TrmE-Era-EngA-EngB-Septin-like GTPase superfamily. TrmE GTPase family. As to quaternary structure, homodimer. Heterotetramer of two MnmE and two MnmG subunits. The cofactor is K(+).

Its subcellular location is the cytoplasm. Exhibits a very high intrinsic GTPase hydrolysis rate. Involved in the addition of a carboxymethylaminomethyl (cmnm) group at the wobble position (U34) of certain tRNAs, forming tRNA-cmnm(5)s(2)U34. The protein is tRNA modification GTPase MnmE of Mesoplasma florum (strain ATCC 33453 / NBRC 100688 / NCTC 11704 / L1) (Acholeplasma florum).